A 447-amino-acid polypeptide reads, in one-letter code: ATP-dependent 6-phosphofructokinase (447 aa).

Residues G88, 154-155 (RG), and 179-182 (GDGT) each bind ATP. Position 180 (D180) interacts with Mg(2+). Substrate-binding positions include 208-210 (TVD), 253-255 (MGR), E315, and 368-371 (YIIR). D210 (proton acceptor) is an active-site residue.

Belongs to the phosphofructokinase type A (PFKA) family. PPi-dependent PFK group II subfamily. Atypical ATP-dependent clade 'X' sub-subfamily. Homodimer. Requires Mg(2+) as cofactor.

Its subcellular location is the cytoplasm. The catalysed reaction is beta-D-fructose 6-phosphate + ATP = beta-D-fructose 1,6-bisphosphate + ADP + H(+). Its pathway is carbohydrate degradation; glycolysis; D-glyceraldehyde 3-phosphate and glycerone phosphate from D-glucose: step 3/4. Catalyzes the phosphorylation of D-fructose 6-phosphate to fructose 1,6-bisphosphate by ATP, the first committing step of glycolysis. The protein is ATP-dependent 6-phosphofructokinase of Borreliella burgdorferi (strain ATCC 35210 / DSM 4680 / CIP 102532 / B31) (Borrelia burgdorferi).